The chain runs to 480 residues: Porphobilinogen deaminase, chloroplastic (480 aa).

A chloroplast-targeting transit peptide spans Met-1 to Ala-139. Residue Cys-395 is modified to S-(dipyrrolylmethanemethyl)cysteine.

It belongs to the HMBS family. The cofactor is dipyrromethane.

The protein resides in the plastid. Its subcellular location is the chloroplast. It catalyses the reaction 4 porphobilinogen + H2O = hydroxymethylbilane + 4 NH4(+). It functions in the pathway porphyrin-containing compound metabolism; protoporphyrin-IX biosynthesis; coproporphyrinogen-III from 5-aminolevulinate: step 2/4. The protein operates within porphyrin-containing compound metabolism; chlorophyll biosynthesis. Functionally, tetrapolymerization of the monopyrrole PBG into the hydroxymethylbilane pre-uroporphyrinogen in several discrete steps. This chain is Porphobilinogen deaminase, chloroplastic, found in Euglena gracilis.